The following is a 123-amino-acid chain: uncharacterized protein (123 aa).

This is an uncharacterized protein from Human cytomegalovirus (strain AD169) (HHV-5).